Here is a 251-residue protein sequence, read N- to C-terminus: 3-deoxy-manno-octulosonate cytidylyltransferase (251 aa).

This sequence belongs to the KdsB family.

It is found in the cytoplasm. It carries out the reaction 3-deoxy-alpha-D-manno-oct-2-ulosonate + CTP = CMP-3-deoxy-beta-D-manno-octulosonate + diphosphate. The protein operates within nucleotide-sugar biosynthesis; CMP-3-deoxy-D-manno-octulosonate biosynthesis; CMP-3-deoxy-D-manno-octulosonate from 3-deoxy-D-manno-octulosonate and CTP: step 1/1. It participates in bacterial outer membrane biogenesis; lipopolysaccharide biosynthesis. Its function is as follows. Activates KDO (a required 8-carbon sugar) for incorporation into bacterial lipopolysaccharide in Gram-negative bacteria. This is 3-deoxy-manno-octulosonate cytidylyltransferase from Brucella ovis (strain ATCC 25840 / 63/290 / NCTC 10512).